The following is a 370-amino-acid chain: MQFELDNTDGKARRGRLKFDRGIVETPAFMPVGTYGTVKGMTPEELDETGAHICLGNTFHLMLRPGTEIIKQHGDLHDFMHWQKPILTDSGGFQVFSLGDLRKITEEGVTFRSPINGEKILLTPEKSMQVQRDLGSDIVMIFDECTPHPATESEARQSMELSLRWAKRSKAEHGDNPSALFGIIQGGMYEGLRDVSLKGLEDIGFDGYAIGGLSVGEPKEDMIRILDHTTDKIPAHKPRYLMGVGKPEDLVEGVRRGVDMFDCVMPTRNARNGHLFVTSGIVKIRNAAHKTDTSPLDDKCDCYTCKNYSRSYLHHLDKCNEILGARLNTIHNLRYYQRVMQGLRDAIAEQKLDEFVADFYAQKDMPVPAL.

The active-site Proton acceptor is the D89. Residues 89–93 (DSGGF), D143, Q185, and G212 each bind substrate. The RNA binding stretch occupies residues 243–249 (GVGKPED). D262 serves as the catalytic Nucleophile. Residues 267-271 (TRNAR) are RNA binding; important for wobble base 34 recognition. C300, C302, C305, and H331 together coordinate Zn(2+).

This sequence belongs to the queuine tRNA-ribosyltransferase family. In terms of assembly, homodimer. Within each dimer, one monomer is responsible for RNA recognition and catalysis, while the other monomer binds to the replacement base PreQ1. It depends on Zn(2+) as a cofactor.

The enzyme catalyses 7-aminomethyl-7-carbaguanine + guanosine(34) in tRNA = 7-aminomethyl-7-carbaguanosine(34) in tRNA + guanine. It functions in the pathway tRNA modification; tRNA-queuosine biosynthesis. Functionally, catalyzes the base-exchange of a guanine (G) residue with the queuine precursor 7-aminomethyl-7-deazaguanine (PreQ1) at position 34 (anticodon wobble position) in tRNAs with GU(N) anticodons (tRNA-Asp, -Asn, -His and -Tyr). Catalysis occurs through a double-displacement mechanism. The nucleophile active site attacks the C1' of nucleotide 34 to detach the guanine base from the RNA, forming a covalent enzyme-RNA intermediate. The proton acceptor active site deprotonates the incoming PreQ1, allowing a nucleophilic attack on the C1' of the ribose to form the product. After dissociation, two additional enzymatic reactions on the tRNA convert PreQ1 to queuine (Q), resulting in the hypermodified nucleoside queuosine (7-(((4,5-cis-dihydroxy-2-cyclopenten-1-yl)amino)methyl)-7-deazaguanosine). This chain is Queuine tRNA-ribosyltransferase, found in Pseudoalteromonas atlantica (strain T6c / ATCC BAA-1087).